The primary structure comprises 190 residues: Dual specificity protein phosphatase 21 (190 aa).

The Tyrosine-protein phosphatase domain occupies 21 to 162; it reads SFSQITRSLF…LINYEFKLFN (142 aa). Positions 43-128 are sufficient for mitochondrial localization; that stretch reads LSSNRITAIV…AYLMKYHSMS (86 aa). The active-site Phosphocysteine intermediate is the C106.

Belongs to the protein-tyrosine phosphatase family. Non-receptor class dual specificity subfamily. In terms of assembly, microtubule inner protein component of sperm flagellar doublet microtubules. In terms of tissue distribution, expressed in testis.

It localises to the cytoplasm. The protein localises to the nucleus. It is found in the mitochondrion inner membrane. The protein resides in the cytoskeleton. Its subcellular location is the flagellum axoneme. The catalysed reaction is O-phospho-L-tyrosyl-[protein] + H2O = L-tyrosyl-[protein] + phosphate. The enzyme catalyses O-phospho-L-seryl-[protein] + H2O = L-seryl-[protein] + phosphate. It catalyses the reaction O-phospho-L-threonyl-[protein] + H2O = L-threonyl-[protein] + phosphate. Its function is as follows. Protein phosphatase component of the sperm flagellar doublet microtubules. May act as a regulator of sperm motility by mediating dephosphorylation of sperm doublet microtubule proteins. Can dephosphorylate single and diphosphorylated synthetic MAPK peptides, with preference for the phosphotyrosine and diphosphorylated forms over phosphothreonine. This is Dual specificity protein phosphatase 21 (DUSP21) from Homo sapiens (Human).